Reading from the N-terminus, the 348-residue chain is uncharacterized protein (348 aa).

6 WD repeats span residues 59–98, 142–182, 185–226, 229–267, 270–309, and 312–347; these read GFQG…VVYS, GHTD…LIQT, DNLG…LLGT, QQPG…ELFS, GPSL…QVTT, and GHQG…SALA.

This is an uncharacterized protein from Synechocystis sp. (strain ATCC 27184 / PCC 6803 / Kazusa).